The sequence spans 584 residues: Arginine--tRNA ligase (584 aa).

A 'HIGH' region motif is present at residues 127-137 (PNTNKPLHIGH).

The protein belongs to the class-I aminoacyl-tRNA synthetase family. As to quaternary structure, monomer.

Its subcellular location is the cytoplasm. The catalysed reaction is tRNA(Arg) + L-arginine + ATP = L-arginyl-tRNA(Arg) + AMP + diphosphate. The protein is Arginine--tRNA ligase of Borrelia hermsii (strain HS1 / DAH).